A 534-amino-acid chain; its full sequence is NAD(P)H-quinone oxidoreductase chain 4 (534 aa).

14 helical membrane passes run 12–32 (FPWLSASILFPIGSAFVIPFF), 44–64 (FALSIALTTFLITVGSYINGF), 94–114 (ISMPLILLTSFITALAVLAAW), 120–140 (PKLFFFLILVMDGGQIAVFAV), 144–164 (LLFFLTWELELIPVYLLLAIW), 176–196 (FIIYTAGSSIFILLAALAMGF), 220–240 (ILCYVGLLIAFGVKLPIVPLH), 251–271 (TAPVHMLLAGILLKMGGYALL), 285–305 (FAPLLIVLGVVNIIYAALTSF), 314–334 (IAYSSISHMGFVLIGIGSFSS), 340–360 (AMLQMVSHGLIGASLFFLVGA), 384–404 (FALWTACSLASLALPGMSGFV), 425–445 (VIMASLAAIGVILTPIYLLSM), and 472–492 (VYIIACLLLPIIGIGLYPRLV).

The protein belongs to the complex I subunit 4 family.

It is found in the cellular thylakoid membrane. The catalysed reaction is a plastoquinone + NADH + (n+1) H(+)(in) = a plastoquinol + NAD(+) + n H(+)(out). It carries out the reaction a plastoquinone + NADPH + (n+1) H(+)(in) = a plastoquinol + NADP(+) + n H(+)(out). Functionally, NDH-1 shuttles electrons from NAD(P)H, via FMN and iron-sulfur (Fe-S) centers, to quinones in the respiratory chain. The immediate electron acceptor for the enzyme in this species is believed to be plastoquinone. Couples the redox reaction to proton translocation (for every two electrons transferred, four hydrogen ions are translocated across the cytoplasmic membrane), and thus conserves the redox energy in a proton gradient. The protein is NAD(P)H-quinone oxidoreductase chain 4 of Prochlorococcus marinus (strain MIT 9312).